The sequence spans 419 residues: MSIGVQSSGINISHAELSRLVDAGKSEQGDKAVRDGGRALARADAALAAVVGERVAARRDAVAGSGAQRVELARPKPDAQTRATDRRTVSGLEREHKRLAASQTPRVTGMHDALVQRHVSLDGAKAAHGEGVKRAAGDAPRAAADAPQRFAFADDKAFDAMLALGAAMQKNVQSDLAMQGKLTMLAHDAMMSAAAQDRSIGAAQMTAAIAGGALQATTSLGGAMQQMKSLSTKSMSIEKELKPQAELKQFHAEQALELRGINKPVLSNDEVSHVKIKRDTGETVRHEIDHGGERMSDEHASVLAQEAPARQHRIDMHGMRHEENLVKAGRQQMKGDLLQSGGQIGKNQIDGASAQQQGADRAEQKEDENAQQTAMAAASTRDEAAHRSREAAQKAIDAAKSQVANDNAVAAQVAGNLRT.

Disordered stretches follow at residues 62–94 (VAGS…GLER) and 338–402 (LQSG…AKSQ). Basic and acidic residues-rich tracts occupy residues 71–94 (ELAR…GLER) and 380–392 (TRDE…REAA).

It belongs to the SctB/SipC family.

It localises to the secreted. This is Effector protein BipC (bipC) from Burkholderia pseudomallei (strain 1710b).